We begin with the raw amino-acid sequence, 771 residues long: Probable exo-1,4-beta-xylosidase xlnD (771 aa).

Residues 1-25 form the signal peptide; sequence MARIMSWHYGKAITLFVCLGPVALS. A glycan (N-linked (GlcNAc...) asparagine) is linked at Asn67. Residue Asp293 is part of the active site. Asn305, Asn345, Asn423, and Asn464 each carry an N-linked (GlcNAc...) asparagine glycan.

Belongs to the glycosyl hydrolase 3 family.

It is found in the secreted. The enzyme catalyses Hydrolysis of (1-&gt;4)-beta-D-xylans, to remove successive D-xylose residues from the non-reducing termini.. It participates in glycan degradation; xylan degradation. Functionally, xylan 1,4-beta-xylosidase involved in the hydrolysis of xylan, a major structural heterogeneous polysaccharide found in plant biomass representing the second most abundant polysaccharide in the biosphere, after cellulose. The protein is Probable exo-1,4-beta-xylosidase xlnD (xlnD) of Neosartorya fischeri (strain ATCC 1020 / DSM 3700 / CBS 544.65 / FGSC A1164 / JCM 1740 / NRRL 181 / WB 181) (Aspergillus fischerianus).